The primary structure comprises 145 residues: Nucleoside diphosphate kinase (145 aa).

ATP-binding residues include Lys11, Phe59, Arg87, Thr93, Arg104, and Asn114. The Pros-phosphohistidine intermediate role is filled by His117.

The protein belongs to the NDK family. Mg(2+) is required as a cofactor.

It localises to the cytoplasm. The enzyme catalyses a 2'-deoxyribonucleoside 5'-diphosphate + ATP = a 2'-deoxyribonucleoside 5'-triphosphate + ADP. It carries out the reaction a ribonucleoside 5'-diphosphate + ATP = a ribonucleoside 5'-triphosphate + ADP. In terms of biological role, major role in the synthesis of nucleoside triphosphates other than ATP. The ATP gamma phosphate is transferred to the NDP beta phosphate via a ping-pong mechanism, using a phosphorylated active-site intermediate. This chain is Nucleoside diphosphate kinase, found in Sulfolobus acidocaldarius (strain ATCC 33909 / DSM 639 / JCM 8929 / NBRC 15157 / NCIMB 11770).